Consider the following 425-residue polypeptide: Tol-Pal system protein TolB (425 aa).

Residues 1–23 (MQMMKKRILLCLLVGMTCLPVLA) form the signal peptide.

Belongs to the TolB family. As to quaternary structure, the Tol-Pal system is composed of five core proteins: the inner membrane proteins TolA, TolQ and TolR, the periplasmic protein TolB and the outer membrane protein Pal. They form a network linking the inner and outer membranes and the peptidoglycan layer.

It localises to the periplasm. Part of the Tol-Pal system, which plays a role in outer membrane invagination during cell division and is important for maintaining outer membrane integrity. The chain is Tol-Pal system protein TolB from Albidiferax ferrireducens (strain ATCC BAA-621 / DSM 15236 / T118) (Rhodoferax ferrireducens).